Here is a 459-residue protein sequence, read N- to C-terminus: E3 ubiquitin-protein ligase RNF25 (459 aa).

The region spanning 18-128 is the RWD domain; sequence SEVEVLESIY…EKGKEILTDN (111 aa). Residues C135, C138, C153, H155, H158, C161, C198, and C201 each contribute to the Zn(2+) site. An RING-type zinc finger spans residues 135–202; sequence CVICLYGFQE…AVGVQCPVCR (68 aa). Disordered regions lie at residues 268-309 and 322-459; these read PPAP…PPLP and TRSN…KDGS. Over residues 282-303 the composition is skewed to polar residues; sequence KGSQPPSTLAAELSTSPAVQST. Basic and acidic residues-rich tracts occupy residues 349 to 370, 378 to 389, 413 to 424, and 446 to 459; these read QPER…RDTQ, PLKEPMDLKPEP, RTRDCVRWERSK, and TRRE…KDGS. S450 is modified (phosphoserine).

This sequence belongs to the RNF25 family. Interacts with UBE2D2, and may also interact with UBE2E1 and UBE2E3. Interacts with RELA/p65. Post-translationally, ubiquitinated; autoubiquitinated.

It localises to the cytoplasm. It carries out the reaction S-ubiquitinyl-[E2 ubiquitin-conjugating enzyme]-L-cysteine + [acceptor protein]-L-lysine = [E2 ubiquitin-conjugating enzyme]-L-cysteine + N(6)-ubiquitinyl-[acceptor protein]-L-lysine.. It functions in the pathway protein modification; protein ubiquitination. Functionally, E3 ubiquitin-protein ligase that plays a key role in the RNF14-RNF25 translation quality control pathway, a pathway that takes place when a ribosome has stalled during translation, and which promotes ubiquitination and degradation of translation factors on stalled ribosomes. Catalyzes ubiquitination of RPS27A in response to ribosome collisions, promoting activation of RNF14. RNF25 catalyzes ubiquitination of other ribosomal proteins on stalled ribosomes, such as RPL0, RPL1, RPL12, RPS13 and RPS17. Also involved in ubiquitination and degradation of stalled ETF1/eRF1. Independently of its function in the response to stalled ribosomes, mediates ubiquitination and subsequent proteasomal degradation of NKD2. May also stimulate transcription mediated by NF-kappa-B via its interaction with RELA/p65. This is E3 ubiquitin-protein ligase RNF25 from Homo sapiens (Human).